A 348-amino-acid chain; its full sequence is L-threonine 3-dehydrogenase (348 aa).

Cys42 is a binding site for Zn(2+). Catalysis depends on charge relay system residues Thr44 and His47. Zn(2+) contacts are provided by His67, Glu68, Cys97, Cys100, Cys103, and Cys111. NAD(+) contacts are provided by residues Leu179, Glu199, Arg204, 266 to 268 (LGL), and 291 to 292 (IT).

It belongs to the zinc-containing alcohol dehydrogenase family. As to quaternary structure, homotetramer. Zn(2+) is required as a cofactor.

It localises to the cytoplasm. It catalyses the reaction L-threonine + NAD(+) = (2S)-2-amino-3-oxobutanoate + NADH + H(+). It participates in amino-acid degradation; L-threonine degradation via oxydo-reductase pathway; glycine from L-threonine: step 1/2. Catalyzes the NAD(+)-dependent oxidation of L-threonine to 2-amino-3-ketobutyrate. The chain is L-threonine 3-dehydrogenase from Pyrococcus abyssi (strain GE5 / Orsay).